The following is a 414-amino-acid chain: MTIKGNRMRLSSDSLSHHLSPSLADNSVVCLMAPTASGKTNLAYELYDSGRYELISVDSALVYRDMTVGTAKPNAAELARYPHHLVDIIDPMQSYSVAEFVSDVARLIDSCHQNGKIPLLVGGTMMYYMALLDGLSPVPVSDDSVRARVEQWRQDEGISALYDYLGKVDAISHERLNATDTQRITRAVEVYLQTNIPISDWQRQPKQALAHNPNQQWHALAVMPDRPWLHTRIEQRLDIMWREGLVEEVISLLERYPLTPSLPSMRCVGYRQVLEYLVQINHPVFEQSHLDKAQFYDAFAQSNLSSVESNEQDATTQSGMTQTHLSVATDQTEALACQQMQNKALYATRQLAKRQYTWLRKVMQLSDTAAEQATVSSAAPSTSIIGFDDMTASQNDKLILHSFITMEQARAYLC.

33 to 40 provides a ligand contact to ATP; that stretch reads APTASGKT. 35 to 40 contacts substrate; the sequence is TASGKT. Interaction with substrate tRNA regions lie at residues 58–61, 182–186, and 266–271; these read DSAL, QRITR, and RCVGYR.

This sequence belongs to the IPP transferase family. Monomer. Mg(2+) serves as cofactor.

It catalyses the reaction adenosine(37) in tRNA + dimethylallyl diphosphate = N(6)-dimethylallyladenosine(37) in tRNA + diphosphate. Its function is as follows. Catalyzes the transfer of a dimethylallyl group onto the adenine at position 37 in tRNAs that read codons beginning with uridine, leading to the formation of N6-(dimethylallyl)adenosine (i(6)A). In Psychrobacter arcticus (strain DSM 17307 / VKM B-2377 / 273-4), this protein is tRNA dimethylallyltransferase.